We begin with the raw amino-acid sequence, 478 residues long: Zinc metalloproteinase/disintegrin (478 aa).

An N-terminal signal peptide occupies residues Met1–Ser20. The propeptide occupies Ile21 to Leu187. In terms of domain architecture, Peptidase M12B spans Arg193 to Pro389. Cystine bridges form between Cys304-Cys384, Cys344-Cys368, and Cys346-Cys351. Residue His329 coordinates Zn(2+). The active site involves Glu330. Positions 333 and 339 each coordinate Zn(2+). Residues Leu390 to Ala407 constitute a propeptide that is removed on maturation. In terms of domain architecture, Disintegrin spans Thr397–Gly478. 6 disulfide bridges follow: Cys411/Cys426, Cys413/Cys421, Cys420/Cys443, Cys434/Cys440, Cys439/Cys464, and Cys452/Cys471. The Cell attachment site; atypical (MVD) motif lies at Met456–Asp458.

It belongs to the venom metalloproteinase (M12B) family. P-II subfamily. P-IIa sub-subfamily. As to quaternary structure, monomer (disintegrin). Zn(2+) is required as a cofactor. In terms of tissue distribution, expressed by the venom gland.

It localises to the secreted. It catalyses the reaction Cleavage of 3-Asn-|-Gln-4, 9-Ser-|-His-10 and 14-Ala-|-Leu-15 bonds in insulin B chain and 14-Tyr-|-Gln-15 and 8-Thr-|-Ser-9 in A chain. Cleaves type IV collagen at 73-Ala-|-Gln-74 in alpha1-(IV) and at 7-Gly-|-Leu-8 in alpha2-(IV).. Its function is as follows. Snake venom zinc metalloproteinase that causes hemorrhage by provoking the degradation of the sub-endothelial matrix proteins (fibronectin, laminin, type IV collagen, nidogen, and gelatins). Potent inhibitor of both collagen- (IC(50)=4 nM) and ADP-induced (IC(50)=8 nM) platelet aggregation. May act by binding to the platelet receptor GPIIb/GPIIIa (ITGA2B/ITGB3). The chain is Zinc metalloproteinase/disintegrin from Crotalus atrox (Western diamondback rattlesnake).